We begin with the raw amino-acid sequence, 276 residues long: Aquaporin-6 (276 aa).

Residues 1–22 (MEPGLCNRAYLLVGGLWTAISK) lie on the Cytoplasmic side of the membrane. The helical transmembrane segment at 23–43 (ALFAEFLATGLYVFFGVGSVL) threads the bilayer. Topologically, residues 44 to 51 (PWPVALPS) are extracellular. A helical membrane pass occupies residues 52–70 (VLQVAITFNLATATAVQIS). The Cytoplasmic portion of the chain corresponds to 71–75 (WKTSG). An intramembrane region (discontinuously helical) is located at residues 76 to 85 (AHANPAVTLA). The short motif at 79-81 (NPA) is the NPA 1 element. Topologically, residues 86 to 96 (YLVGSHISLPR) are cytoplasmic. The chain crosses the membrane as a helical span at residues 97-118 (AVAYIAAQLAGATVGAALLYGV). Residues 119–138 (TPGGVRETLGVNVVHNSTST) lie on the Extracellular side of the membrane. N-linked (GlcNAc...) asparagine glycosylation occurs at N134. A helical transmembrane segment spans residues 139–159 (GQAVAVELVLTLQLVLCVFAS). Residues 160 to 165 (MDSRQT) are Cytoplasmic-facing. A helical transmembrane segment spans residues 166-185 (LGSPAAMIGTSVALGHLIGI). The Extracellular portion of the chain corresponds to 186-189 (YFTG). Positions 190–202 (CSMNPARSFGPAV) form an intramembrane region, discontinuously helical. Positions 193–195 (NPA) match the NPA 2 motif. Residues 203-210 (IVGKFAVH) lie on the Extracellular side of the membrane. Residues 211–231 (WIFWVGPLTGAVLASLIYNFI) traverse the membrane as a helical segment. The Cytoplasmic portion of the chain corresponds to 232–276 (LFPDTKTVAQRLAILVGTTKVEKVVDLEPQKKESQTNSEDTEVSV).

It belongs to the MIP/aquaporin (TC 1.A.8) family. Homotetramer; each monomer provides an independent solute pore. In terms of processing, N-glycosylated. In terms of tissue distribution, kidney.

Its subcellular location is the cytoplasmic vesicle membrane. It catalyses the reaction nitrate(in) = nitrate(out). The catalysed reaction is iodide(out) = iodide(in). The enzyme catalyses bromide(in) = bromide(out). It carries out the reaction chloride(in) = chloride(out). It catalyses the reaction Na(+)(in) = Na(+)(out). The catalysed reaction is H2O(in) = H2O(out). The enzyme catalyses CO2(out) = CO2(in). It carries out the reaction NH4(+)(in) = NH4(+)(out). With respect to regulation, activated by mercury and pH-gated, anion permeability is observed at pH 5.5 and increases markedly at pH 4.0. Selectivity for chloride increases at low pH. The water channel activity is stimulated by mercury by opposition to other aquaporins. Aquaporins form homotetrameric transmembrane channels, with each monomer independently mediating water transport across the plasma membrane along its osmotic gradient. Unlike classical aquaporins, AQP6 is an intracellular channel with selective anion permeability, particularly for nitrate, and exhibits very low water permeability. It may also facilitate the transport of gases, such as CO2 and NH4(+), as demonstrated in vitro. The chain is Aquaporin-6 from Rattus norvegicus (Rat).